The sequence spans 344 residues: Uroporphyrinogen decarboxylase (344 aa).

Residues 27–31, F46, D77, Y153, T208, and H324 each bind substrate; that span reads RQAGR.

Belongs to the uroporphyrinogen decarboxylase family. As to quaternary structure, homodimer.

Its subcellular location is the cytoplasm. It carries out the reaction uroporphyrinogen III + 4 H(+) = coproporphyrinogen III + 4 CO2. It functions in the pathway porphyrin-containing compound metabolism; protoporphyrin-IX biosynthesis; coproporphyrinogen-III from 5-aminolevulinate: step 4/4. In terms of biological role, catalyzes the decarboxylation of four acetate groups of uroporphyrinogen-III to yield coproporphyrinogen-III. This chain is Uroporphyrinogen decarboxylase, found in Bradyrhizobium diazoefficiens (strain JCM 10833 / BCRC 13528 / IAM 13628 / NBRC 14792 / USDA 110).